Here is a 105-residue protein sequence, read N- to C-terminus: U21-theraphotoxin-Cg1a 4 (105 aa).

Positions 1-21 (MKVSVLITLAVLGVMFLLTSA) are cleaved as a signal peptide. The propeptide occupies 22 to 48 (EERGSDQMDSPAWLKSMEIIFQSEERE). Disulfide bonds link Cys49/Cys63, Cys56/Cys68, and Cys62/Cys76. Residue Val82 is modified to Valine amide. The propeptide occupies 83-105 (GKWEMLINMNIFRIVFSYSMCTV).

Belongs to the neurotoxin 10 (Hwtx-1) family. 05 (F4a) subfamily. In terms of tissue distribution, expressed by the venom gland.

It is found in the secreted. Functionally, probable ion channel inhibitor. This is U21-theraphotoxin-Cg1a 4 from Chilobrachys guangxiensis (Chinese earth tiger tarantula).